The chain runs to 145 residues: Large ribosomal subunit protein uL11 (145 aa).

This sequence belongs to the universal ribosomal protein uL11 family. Part of the ribosomal stalk of the 50S ribosomal subunit. Interacts with L10 and the large rRNA to form the base of the stalk. L10 forms an elongated spine to which L12 dimers bind in a sequential fashion forming a multimeric L10(L12)X complex. One or more lysine residues are methylated.

Forms part of the ribosomal stalk which helps the ribosome interact with GTP-bound translation factors. This chain is Large ribosomal subunit protein uL11, found in Aquifex aeolicus (strain VF5).